A 364-amino-acid chain; its full sequence is MDYDSYQHYFYDYDCGEDFYRSTAPSEDIWKKFELVPSPPTSPPWGLGPGAGDPAPGIGPPEPWPGGCTGDEAESRGHSKGWGRNYASIIRRDCMWSGFSARERLERAVSDRLAPGAPRGNPPKASAAPDCTPSLEAGNPAPAAPCPLGEPKTQACSGSESPSDSENEEIDVVTVEKRQSLGIRKPVTITVRADPLDPCMKHFHISIHQQQHNYAARFPPESCSQEEASERGPQEEVLERDAAGEKEDEEDEEIVSPPPVESEAAQSCHPKPVSSDTEDVTKRKNHNFLERKRRNDLRSRFLALRDQVPTLASCSKAPKVVILSKALEYLQALVGAEKRMATEKRQLRCRQQQLQKRIAYLTGY.

Disordered stretches follow at residues 41–81, 111–172, and 219–285; these read TSPP…HSKG, DRLA…EIDV, and PPES…KRKN. Positions 228–245 are enriched in basic and acidic residues; sequence ASERGPQEEVLERDAAGE. A bHLH domain is found at 281–333; it reads TKRKNHNFLERKRRNDLRSRFLALRDQVPTLASCSKAPKVVILSKALEYLQAL. The tract at residues 333-361 is leucine-zipper; it reads LVGAEKRMATEKRQLRCRQQQLQKRIAYL.

Efficient DNA binding requires dimerization with another bHLH protein. Binds DNA as a heterodimer with MAX.

It is found in the nucleus. This is Protein L-Myc (MYCL) from Homo sapiens (Human).